Here is a 153-residue protein sequence, read N- to C-terminus: Ribonuclease HI (153 aa).

In terms of domain architecture, RNase H type-1 spans 1 to 141; it reads MKSVNIFTDG…CDELAKLGAN (141 aa). Asp9, Glu47, Asp69, and Asp133 together coordinate Mg(2+).

This sequence belongs to the RNase H family. As to quaternary structure, monomer. It depends on Mg(2+) as a cofactor.

It is found in the cytoplasm. It catalyses the reaction Endonucleolytic cleavage to 5'-phosphomonoester.. Its function is as follows. Endonuclease that specifically degrades the RNA of RNA-DNA hybrids. This chain is Ribonuclease HI, found in Haemophilus ducreyi (strain 35000HP / ATCC 700724).